Here is an 82-residue protein sequence, read N- to C-terminus: Small ribosomal subunit protein bS18 (82 aa).

Residues 1–25 (MTEMNQTAIRRPFHRRRKTCPFSGT) form a disordered region.

This sequence belongs to the bacterial ribosomal protein bS18 family. In terms of assembly, part of the 30S ribosomal subunit. Forms a tight heterodimer with protein bS6.

Functionally, binds as a heterodimer with protein bS6 to the central domain of the 16S rRNA, where it helps stabilize the platform of the 30S subunit. In Bartonella henselae (strain ATCC 49882 / DSM 28221 / CCUG 30454 / Houston 1) (Rochalimaea henselae), this protein is Small ribosomal subunit protein bS18.